The primary structure comprises 241 residues: Pyridoxine 5'-phosphate synthase (241 aa).

N7 lines the 3-amino-2-oxopropyl phosphate pocket. Residue 9 to 10 (DH) participates in 1-deoxy-D-xylulose 5-phosphate binding. R18 contacts 3-amino-2-oxopropyl phosphate. H43 (proton acceptor) is an active-site residue. R45 and H50 together coordinate 1-deoxy-D-xylulose 5-phosphate. The Proton acceptor role is filled by E70. 1-deoxy-D-xylulose 5-phosphate is bound at residue T100. H190 (proton donor) is an active-site residue. 3-amino-2-oxopropyl phosphate-binding positions include G191 and 212–213 (GH).

This sequence belongs to the PNP synthase family. Homooctamer; tetramer of dimers.

It is found in the cytoplasm. The catalysed reaction is 3-amino-2-oxopropyl phosphate + 1-deoxy-D-xylulose 5-phosphate = pyridoxine 5'-phosphate + phosphate + 2 H2O + H(+). The protein operates within cofactor biosynthesis; pyridoxine 5'-phosphate biosynthesis; pyridoxine 5'-phosphate from D-erythrose 4-phosphate: step 5/5. In terms of biological role, catalyzes the complicated ring closure reaction between the two acyclic compounds 1-deoxy-D-xylulose-5-phosphate (DXP) and 3-amino-2-oxopropyl phosphate (1-amino-acetone-3-phosphate or AAP) to form pyridoxine 5'-phosphate (PNP) and inorganic phosphate. In Bordetella avium (strain 197N), this protein is Pyridoxine 5'-phosphate synthase.